The sequence spans 476 residues: Hyaluronidase-2 (476 aa).

Residues M1–A20 form the signal peptide. Disulfide bonds link C47–C343 and C214–C230. Residues N77 and N106 are each glycosylated (N-linked (GlcNAc...) asparagine). E138 acts as the Proton donor in catalysis. N-linked (GlcNAc...) asparagine glycosylation is found at N340 and N360. The region spanning A364–Q442 is the EGF-like domain. Disulfide bonds link C368-C379, C373-C430, and C432-C441. G451 is lipidated: GPI-anchor amidated glycine. Residues A452 to S476 constitute a propeptide, removed in mature form.

The protein belongs to the glycosyl hydrolase 56 family. As to quaternary structure, interacts with MST1R. (Microbial infection) Interacts with Jaagsiekte sheep retrovirus (JSRV) envelope proteins.

The protein resides in the cell membrane. The catalysed reaction is Random hydrolysis of (1-&gt;4)-linkages between N-acetyl-beta-D-glucosamine and D-glucuronate residues in hyaluronate.. Functionally, catalyzes hyaluronan degradation into small fragments that are endocytosed and degraded in lysosomes by HYAL1 and exoglycosidases. Essential for the breakdown of extracellular matrix hyaluronan. The protein is Hyaluronidase-2 (HYAL2) of Ovis aries (Sheep).